The sequence spans 227 residues: 2,3-bisphosphoglycerate-dependent phosphoglycerate mutase (227 aa).

Substrate is bound by residues 7–14, 20–21, Arg59, 86–89, Lys97, 113–114, and 182–183; these read RHGFSEWN, TG, ERHY, RR, and GN. The active-site Tele-phosphohistidine intermediate is the His8. Glu86 (proton donor/acceptor) is an active-site residue.

The protein belongs to the phosphoglycerate mutase family. BPG-dependent PGAM subfamily. Homodimer.

The enzyme catalyses (2R)-2-phosphoglycerate = (2R)-3-phosphoglycerate. Its pathway is carbohydrate degradation; glycolysis; pyruvate from D-glyceraldehyde 3-phosphate: step 3/5. Its function is as follows. Catalyzes the interconversion of 2-phosphoglycerate and 3-phosphoglycerate. This is 2,3-bisphosphoglycerate-dependent phosphoglycerate mutase from Actinobacillus pleuropneumoniae serotype 5b (strain L20).